A 233-amino-acid polypeptide reads, in one-letter code: Octanoyltransferase (233 aa).

A BPL/LPL catalytic domain is found at 38–218; sequence AGGPDTLLLL…LVCDALDGVL (181 aa). Positions 57–66 are enriched in basic and acidic residues; sequence RRTEPHERPL. Residues 57 to 77 are disordered; the sequence is RRTEPHERPLDGTPVVDTDRG. Substrate-binding positions include 76–83, 148–150, and 161–163; these read RGGKITWH, AIG, and GFA. The active-site Acyl-thioester intermediate is the cysteine 179.

Belongs to the LipB family.

The protein localises to the cytoplasm. The catalysed reaction is octanoyl-[ACP] + L-lysyl-[protein] = N(6)-octanoyl-L-lysyl-[protein] + holo-[ACP] + H(+). It functions in the pathway protein modification; protein lipoylation via endogenous pathway; protein N(6)-(lipoyl)lysine from octanoyl-[acyl-carrier-protein]: step 1/2. Functionally, catalyzes the transfer of endogenously produced octanoic acid from octanoyl-acyl-carrier-protein onto the lipoyl domains of lipoate-dependent enzymes. Lipoyl-ACP can also act as a substrate although octanoyl-ACP is likely to be the physiological substrate. This Mycobacterium avium (strain 104) protein is Octanoyltransferase.